We begin with the raw amino-acid sequence, 311 residues long: R2-like ligand binding oxidase (311 aa).

Positions 68, 101, and 104 each coordinate Mn(2+). Residues 71 to 162 constitute a cross-link (3-(O4'-tyrosyl)-valine (Val-Tyr)); the sequence is VTQDIQPFMA…AAQVRASVTY (92 aa). A Fe cation-binding site is contributed by E101. E167, E202, and H205 together coordinate Fe cation.

This sequence belongs to the ribonucleoside diphosphate reductase small chain family. R2-like ligand binding oxidase subfamily. In terms of assembly, homodimer. It depends on Fe cation as a cofactor. The cofactor is Mn(2+).

Functionally, probable oxidase that might be involved in lipid metabolism. In Mycolicibacterium paratuberculosis (strain ATCC BAA-968 / K-10) (Mycobacterium paratuberculosis), this protein is R2-like ligand binding oxidase.